Consider the following 329-residue polypeptide: MSNFSITVIGAGAYGTALAVSFSKKNRKVFLWGRNKKHMQSLKKDRCNKKFLPKINFPNDLKIEISLKKAIKYSNTIVIAVPSIGFKNILIKIQPFLNKNVFLICGTKGLEPRTGRLLQEVVYDILGRETCLSIISGPSFARYLAIGLPTSMVLANNCIKTCKFLANKLKNKFLNIYSISDLVGVQIGGVIKNVIAIASGMSDGIQMGPNAKTAIITYGLEEMYKLGKVMGANEYTFMGMSGVGDLVLTCTDDESRNRKFGILLAQGYSIENAKSKVGCIIEGYNNIKEILILSCKHKINMPIIKQVYKILYMHQPVKKSILNIFLNKK.

NADPH-binding residues include Tyr14, Arg34, and Lys108. Residues Lys108, Gly137, and Ser139 each coordinate sn-glycerol 3-phosphate. NADPH is bound at residue Ala141. Sn-glycerol 3-phosphate-binding residues include Lys192, Asp245, Ser255, Arg256, and Asn257. Lys192 (proton acceptor) is an active-site residue. NADPH is bound at residue Arg256. Ile280 and Glu282 together coordinate NADPH.

This sequence belongs to the NAD-dependent glycerol-3-phosphate dehydrogenase family.

The protein resides in the cytoplasm. The enzyme catalyses sn-glycerol 3-phosphate + NAD(+) = dihydroxyacetone phosphate + NADH + H(+). The catalysed reaction is sn-glycerol 3-phosphate + NADP(+) = dihydroxyacetone phosphate + NADPH + H(+). The protein operates within membrane lipid metabolism; glycerophospholipid metabolism. In terms of biological role, catalyzes the reduction of the glycolytic intermediate dihydroxyacetone phosphate (DHAP) to sn-glycerol 3-phosphate (G3P), the key precursor for phospholipid synthesis. The sequence is that of Glycerol-3-phosphate dehydrogenase [NAD(P)+] from Wigglesworthia glossinidia brevipalpis.